A 347-amino-acid chain; its full sequence is Dihydroorotase (347 aa).

His14 and His16 together coordinate Zn(2+). Substrate contacts are provided by residues 16–18 and Asn42; that span reads HLR. Zn(2+)-binding residues include Lys100, His137, and His175. Lys100 is subject to N6-carboxylysine. His137 is a binding site for substrate. Substrate is bound at residue Leu220. Asp248 is a Zn(2+) binding site. Asp248 is a catalytic residue. Residues His252 and Ala264 each coordinate substrate.

This sequence belongs to the metallo-dependent hydrolases superfamily. DHOase family. Class II DHOase subfamily. As to quaternary structure, homodimer. It depends on Zn(2+) as a cofactor.

The enzyme catalyses (S)-dihydroorotate + H2O = N-carbamoyl-L-aspartate + H(+). The protein operates within pyrimidine metabolism; UMP biosynthesis via de novo pathway; (S)-dihydroorotate from bicarbonate: step 3/3. In terms of biological role, catalyzes the reversible cyclization of carbamoyl aspartate to dihydroorotate. The chain is Dihydroorotase from Jannaschia sp. (strain CCS1).